The chain runs to 220 residues: Probable transcriptional regulator NRG2 (220 aa).

C2H2-type zinc fingers lie at residues 153 to 175 and 181 to 205; these read HFCKICSTGFTTSGHLSRHNRIH and HICPHEGCGQRFSRHDNCNQHYRTH.

It localises to the nucleus. In terms of biological role, transcriptional repressor. This chain is Probable transcriptional regulator NRG2 (NRG2), found in Saccharomyces cerevisiae (strain ATCC 204508 / S288c) (Baker's yeast).